A 474-amino-acid polypeptide reads, in one-letter code: Microtubule protein alp7 (474 aa).

A compositionally biased stretch (low complexity) spans 1–20 (MSDIVSSSTDYSRRSPSSSS). Disordered stretches follow at residues 1 to 79 (MSDI…DTLN), 93 to 114 (KSFD…LSQH), and 164 to 223 (SLQT…NSTQ). Ser-17 bears the Phosphoserine mark. Residues 25 to 36 (ETDHTGFHEKRQ) are compositionally biased toward basic and acidic residues. Residues 66–76 (SKPNPQLNLKD) show a composition bias toward polar residues. Polar residues-rich tracts occupy residues 177 to 189 (SNGS…NTAP) and 201 to 223 (RNSA…NSTQ). Coiled-coil stretches lie at residues 219 to 273 (INST…QLRS) and 367 to 471 (KISN…LNLE).

Interacts with alp14.

The protein resides in the nucleus. Its subcellular location is the cytoplasm. It is found in the cytoskeleton. The protein localises to the spindle. It localises to the chromosome. The protein resides in the centromere. Its subcellular location is the kinetochore. Required for bipolar spindle formation and proper chromosome segregation. Has an indirect role in connecting the kinetochores and the plus end of pole to chromosome microtubules by targeting alp14 to the spindle pole body. Involved in the emergence of large microtubule organizing centers (MTOC) in interphase cells. Attaches to the minus ends of microtubules and associates with the sites of microtubule attachment on the nuclear envelope. This leads to the stabilization of the microtubule bundles. This chain is Microtubule protein alp7 (alp7), found in Schizosaccharomyces pombe (strain 972 / ATCC 24843) (Fission yeast).